A 631-amino-acid chain; its full sequence is Shootin-1 (631 aa).

Residue M1 is modified to N-acetylmethionine. A phosphoserine mark is found at S3 and S4. Residues 7-353 (EKQLQLITSL…RVNQSENSVP (347 aa)) are a coiled coil. S101 carries the phosphoserine; by PAK1 modification. Residue S249 is modified to Phosphoserine. The segment at 343 to 511 (KRVNQSENSV…SESKSMPVLG (169 aa)) is disordered. Positions 352–369 (VPPPPPPPPPLPPPPPNP) are enriched in pro residues. A Phosphoserine modification is found at S375. Over residues 403–418 (TDLKRQAVEEMMDRIK) the composition is skewed to basic and acidic residues. Over residues 456 to 465 (LNKSTSSRSL) the composition is skewed to polar residues. S473 is subject to Phosphoserine. T487 is subject to Phosphothreonine. The span at 490 to 505 (ADSSSPTGILATSESK) shows a compositional bias: polar residues. S494 bears the Phosphoserine mark. A Phosphothreonine modification is found at T496. Phosphoserine is present on residues S506, S515, S532, and S534. 2 disordered regions span residues 524 to 566 (KTLE…IGCR) and 579 to 631 (VVVL…SSNC). T537 is modified (phosphothreonine). The segment covering 550-561 (CTSSKVTFQPPS) has biased composition (polar residues). Basic and acidic residues predominate over residues 590–631 (PQTKDQVAEKDPTQHKEDEGEIQPENKEDSIENVRETDSSNC).

It belongs to the shootin family. In terms of assembly, interacts with L1CAM; this interaction occurs in axonal growth cones. Interacts with actin filament retrograde flow; this interaction is enhanced in a netrin-1- and PAK1-dependent manner and promotes F-actin-substrate coupling and concomitant formation of traction forces at axonal growth cones. Interacts with RUFY3. Interacts with PFN2. Interacts (via N-terminus) with KIF20B; this interaction is direct and promotes the association of SHTN1 to microtubules in primary neurons. Associates with microtubule. In terms of processing, phosphorylated on Ser-101 and Ser-249 by PAK1 through a CDC42- and RAC1-dependent signaling pathway, which enhances its association with F-actin retrograde flow in filopodia and lamellipodia of axonal growth cones. Phosphorylation on Ser-101 and Ser-249 is increased by netrin-1.

It is found in the perikaryon. The protein resides in the cell projection. It localises to the axon. The protein localises to the growth cone. Its subcellular location is the cytoplasm. It is found in the cytoskeleton. The protein resides in the filopodium. It localises to the lamellipodium. Its function is as follows. Involved in the generation of internal asymmetric signals required for neuronal polarization and neurite outgrowth. Mediates netrin-1-induced F-actin-substrate coupling or 'clutch engagement' within the axon growth cone through activation of CDC42, RAC1 and PAK1-dependent signaling pathway, thereby converting the F-actin retrograde flow into traction forces, concomitantly with filopodium extension and axon outgrowth. Plays a role in cytoskeletal organization by regulating the subcellular localization of phosphoinositide 3-kinase (PI3K) activity at the axonal growth cone. Also plays a role in regenerative neurite outgrowth. In the developing cortex, cooperates with KIF20B to promote both the transition from the multipolar to the bipolar stage and the radial migration of cortical neurons from the ventricular zone toward the superficial layer of the neocortex. Involved in the accumulation of phosphatidylinositol 3,4,5-trisphosphate (PIP3) in the growth cone of primary hippocampal neurons. The chain is Shootin-1 from Homo sapiens (Human).